The sequence spans 135 residues: Probable histone H2A.7 (135 aa).

This sequence belongs to the histone H2A family. As to quaternary structure, the nucleosome is a histone octamer containing two molecules each of H2A, H2B, H3 and H4 assembled in one H3-H4 heterotetramer and two H2A-H2B heterodimers. The octamer wraps approximately 147 bp of DNA.

It is found in the nucleus. Its subcellular location is the chromosome. Functionally, core component of nucleosome. Nucleosomes wrap and compact DNA into chromatin, limiting DNA accessibility to the cellular machineries which require DNA as a template. Histones thereby play a central role in transcription regulation, DNA repair, DNA replication and chromosomal stability. DNA accessibility is regulated via a complex set of post-translational modifications of histones, also called histone code, and nucleosome remodeling. The polypeptide is Probable histone H2A.7 (Oryza sativa subsp. indica (Rice)).